Here is a 458-residue protein sequence, read N- to C-terminus: MTRDVRQLFGTDGVRGRANFEPMTVETSVLLGKAVAGVLLEKHAGKHRVVVGKDTRLSGYMFENALIAGLTSMGIETLMLGPIPTPGVAFITRAYRADAGIMISASHNPYRDNGIKIFSSDGFKIGQAVEERIEAMVASKDFGKLPDDHAVGKNKRVKDATGRYIEYAKATFPKGRTLKGLRIVLDCAHGATYRVAPSVFEELDAEVICYGCEPSGCNINAGCGALWPSTIQKAVIEHKADVGIALDGDGDRLIMVDEKGHIVDGDMLLSICASDLKRRQALSDNRVVATVMTNFGVLRYLESLGIQVTISPVGDRHVLQHMLENQAVLGGEQSGHMIFLDYNTTGDGIVSALQVLRIMIESESTLSDLTACIAKSPQALINVPVTKKVPLESLANVQGVLKEVKEVLGDSGRILLRYSGTENICRVMVEGTKKHQVDSLAKTIVDVVEAEIGAEISE.

Catalysis depends on serine 106, which acts as the Phosphoserine intermediate. 4 residues coordinate Mg(2+): serine 106, aspartate 247, aspartate 249, and aspartate 251. Serine 106 carries the post-translational modification Phosphoserine.

The protein belongs to the phosphohexose mutase family. Mg(2+) serves as cofactor. In terms of processing, activated by phosphorylation.

The enzyme catalyses alpha-D-glucosamine 1-phosphate = D-glucosamine 6-phosphate. Its function is as follows. Catalyzes the conversion of glucosamine-6-phosphate to glucosamine-1-phosphate. This chain is Phosphoglucosamine mutase, found in Chlamydia trachomatis serovar A (strain ATCC VR-571B / DSM 19440 / HAR-13).